The primary structure comprises 117 residues: Appetite-regulating hormone (117 aa).

An N-terminal signal peptide occupies residues 1-23 (MPSPGTVCSLLLLGMLWLDLAMA). Residue Ser26 is the site of O-decanoyl serine; alternate attachment. Ser26 carries O-hexanoyl serine; alternate lipidation. Ser26 carries the O-octanoyl serine; alternate lipid modification. The disordered stretch occupies residues 29 to 67 (SPEHQRAQQRKESKKPPAKLQPRALGGWLRPEDGDQAEG). A compositionally biased stretch (basic and acidic residues) spans 31–43 (EHQRAQQRKESKK). Residues 52–75 (ALGGWLRPEDGDQAEGAEDELEIQ) constitute a propeptide, removed in mature form. Leu98 is modified (leucine amide). Positions 99–117 (GKFLQDILWEEAKEAPADK) are cleaved as a propeptide — removed in mature form.

This sequence belongs to the motilin family. Post-translationally, O-octanoylated by GOAT/MBOAT4. O-octanoylation is essential for ghrelin activity. Amidation of Leu-98 is essential for obestatin activity.

It is found in the secreted. Functionally, ghrelin is the ligand for growth hormone secretagogue receptor type 1 (GHSR). Induces the release of growth hormone from the pituitary. Has an appetite-stimulating effect, induces adiposity and stimulates gastric acid secretion. Involved in growth regulation. In terms of biological role, obestatin may be the ligand for GPR39. May have an appetite-reducing effect resulting in decreased food intake. May reduce gastric emptying activity and jejunal motility. This is Appetite-regulating hormone (GHRL) from Papio hamadryas (Hamadryas baboon).